Here is a 323-residue protein sequence, read N- to C-terminus: tRNA U34 carboxymethyltransferase (323 aa).

Carboxy-S-adenosyl-L-methionine contacts are provided by residues Lys90, Trp104, Lys109, Gly129, 182-183 (IE), Met197, Tyr201, and Arg316.

Belongs to the class I-like SAM-binding methyltransferase superfamily. CmoB family. In terms of assembly, homotetramer.

It catalyses the reaction carboxy-S-adenosyl-L-methionine + 5-hydroxyuridine(34) in tRNA = 5-carboxymethoxyuridine(34) in tRNA + S-adenosyl-L-homocysteine + H(+). In terms of biological role, catalyzes carboxymethyl transfer from carboxy-S-adenosyl-L-methionine (Cx-SAM) to 5-hydroxyuridine (ho5U) to form 5-carboxymethoxyuridine (cmo5U) at position 34 in tRNAs. This is tRNA U34 carboxymethyltransferase from Idiomarina loihiensis (strain ATCC BAA-735 / DSM 15497 / L2-TR).